The following is a 2260-amino-acid chain: Reducing polyketide synthase pksF (2260 aa).

The region spanning 20–445 is the Ketosynthase family 3 (KS3) domain; it reads VEPIAIVGFG…GTNAHVVLDD (426 aa). Catalysis depends on for beta-ketoacyl synthase activity residues cysteine 194, histidine 329, and histidine 368. Residues 598-933 form a malonyl-CoA:ACP transacylase (MAT) domain region; sequence FVFTGQGAQW…ECAGKLHTIG (336 aa). Catalysis depends on serine 689, which acts as the For malonyltransferase activity. The segment at 984–1121 is N-terminal hotdog fold; the sequence is HELLGSRTPD…GYVAIEYDDR (138 aa). Residues 984-1281 form a dehydratase (DH) domain region; the sequence is HELLGSRTPD…FRNKLFSITA (298 aa). The PKS/mFAS DH domain occupies 984–1306; it reads HELLGSRTPD…TSTIGRNSPS (323 aa). Catalysis depends on histidine 1016, which acts as the Proton acceptor; for dehydratase activity. Residues 1150-1306 are C-terminal hotdog fold; that stretch reads RIAIDSADIY…TSTIGRNSPS (157 aa). Catalysis depends on aspartate 1216, which acts as the Proton donor; for dehydratase activity. Residues 1544-1859 are enoylreductase (ER) domain; that stretch reads GILKTLHYEQ…DVDVVEKIVI (316 aa). Positions 1882–2104 are ketoreductase (KR) domain; sequence PDASYLIAGA…LRFCCDPDRV (223 aa). The Carrier domain maps to 2174-2251; the sequence is QATDIVVEAI…LLAVKVAGKS (78 aa). Serine 2211 bears the O-(pantetheine 4'-phosphoryl)serine mark.

The cofactor is pantetheine 4'-phosphate.

In terms of biological role, reducing polyketide synthase that catalyzes the formation of a C22 intermediate attached to the ACP. Release by intramolecular hydrolysis by the enolized delta-carbonyl would give the pyrone product aslanipyrone. Alternatively, KR-mediated reduction of the beta-carbonyl of the C22 intermediate would form a beta-hydroxy thioester intermediate, which could be a substrate for a further KS-mediated condensation of an additional C2 unit to form a C24 intermediate, which cyclizes by aldol condensation followed by decarboxylation to form aslaniol. Neither aslanipyrone, aslaniol, nor their derivatives have been detected in A.solani, probably due to a low abundance and/or extensive post-PKS modification. It is assumed that the branching point from C22 to C24 is the result of KR activity on the C22 intermediate anchored to the ACP. The protein is Reducing polyketide synthase pksF of Alternaria solani.